The primary structure comprises 166 residues: Bud site selection protein 20 (166 aa).

A Nuclear localization signal motif is present at residues 7-16 (KRYKTKRRTR). A nuclear export signal-like (NES-like) region spans residues 17–31 (DLDLIYNDLSTKESV). The C2H2-type zinc finger occupies 49 to 73 (HYCIHCAKYMETAIALKTHLKGKVH).

Belongs to the ZNF593/BUD20 C2H2-type zinc-finger protein family. In terms of assembly, associates with pre-60S ribosomal particles; released from the pre-60S particle very early in the cytoplasm.

The protein localises to the nucleus. It is found in the cytoplasm. Involved in pre-60S ribosomal particles maturation by promoting the nuclear export of the 60S ribosome. Involved in positioning the proximal bud pole signal. The protein is Bud site selection protein 20 of Saccharomyces cerevisiae (strain ATCC 204508 / S288c) (Baker's yeast).